The chain runs to 153 residues: Small ribosomal subunit protein bS6 (153 aa).

Residues 94–153 form a disordered region; that stretch reads EAHEEGPSAMMQKRDRDDRPRRDGDRPDRGDRGDRGDRGPREGGRESFGDRPRRPREDRA.

It belongs to the bacterial ribosomal protein bS6 family.

Binds together with bS18 to 16S ribosomal RNA. The sequence is that of Small ribosomal subunit protein bS6 from Allorhizobium ampelinum (strain ATCC BAA-846 / DSM 112012 / S4) (Agrobacterium vitis (strain S4)).